We begin with the raw amino-acid sequence, 367 residues long: Cystinosin (367 aa).

The signal sequence occupies residues 1–22; that stretch reads MIRRWLVIFILFPLQLIEKCES. The Lumenal segment spans residues 23 to 125; sequence TVDFSVPPIV…LVIHSNIVSI (103 aa). N-linked (GlcNAc...) asparagine glycans are attached at residues Asn51, Asn66, Asn84, Asn104, and Asn107. In terms of domain architecture, PQ-loop 1 spans 123-189; that stretch reads VSIINQVIGW…LFWVPSIKEQ (67 aa). A helical transmembrane segment spans residues 126–150; sequence INQVIGWIYFVAWSVSFYPQVITNW. Topologically, residues 151–159 are cytoplasmic; sequence RRKSVVGLS. The chain crosses the membrane as a helical span at residues 160–179; sequence FDFVVLNLMGFVAYSVFNIG. Asn166 contributes to the L-cystine binding site. The Lumenal segment spans residues 180-202; the sequence is LFWVPSIKEQFLLKYPNGVNPVD. Residues 203 to 225 form a helical membrane-spanning segment; that stretch reads SNDVFFSLHAVALTLVVIVQCLL. Residue Asp205 coordinates H(+). Residues 226–234 are Cytoplasmic-facing; it reads YERGSQRVS. The chain crosses the membrane as a helical span at residues 235–257; it reads WLAISFLVLSWLFTLIALIMAAV. The Lumenal segment spans residues 258-263; that stretch reads GATTWL. Residues 263–328 form the PQ-loop 2 domain; the sequence is LQFLFCFSYI…QSYNNDQWTL (66 aa). Residues 264–289 form a helical membrane-spanning segment; the sequence is QFLFCFSYIKLAVTLVKYFPQAYMNF. L-cystine contacts are provided by Lys273, Lys280, and Tyr281. Residues 290–298 are Cytoplasmic-facing; that stretch reads HYKSTEGWS. A helical membrane pass occupies residues 299 to 308; that stretch reads IGNVLLDFTG. Positions 301 and 305 each coordinate L-cystine. Position 305 (Asp305) interacts with H(+). The Lumenal segment spans residues 309 to 331; the sequence is GSFSLLQMFLQSYNNDQWTLIFG. The chain crosses the membrane as a helical span at residues 332 to 354; it reads DPTKFGLGIFSIIFDVVFFIQHF. A H(+)-binding site is contributed by Asp346. The Cytoplasmic segment spans residues 355 to 367; the sequence is CLYRKKPGYDQLN. The short motif at 362–366 is the Lysosomal targeting motif element; the sequence is GYDQL.

Belongs to the cystinosin family. Interacts with components of the V-ATPase complex. Interacts with components of the Ragulator complex. Interacts with RRAGA/RagA and RRAGC/RagC. Interacts with AP-3 complex subunit mu (AP3M1 or AP3M2).

Its subcellular location is the lysosome membrane. The protein localises to the melanosome membrane. The enzyme catalyses L-cystine(out) + H(+)(out) = L-cystine(in) + H(+)(in). Its activity is regulated as follows. Switches between a lumen- and a cytosol-open conformation: pH induces conformational changes and shifts the equilibrium to facilitate the transition between the lumen- and cytosol-open conformation, thereby promoting cystine transport. Protonation of specific aspartate residues (Asp-205, Asp-305 and Asp-346) favors the cytosol-open conformation. In terms of biological role, cystine/H(+) symporter that mediates export of cystine, the oxidized dimer of cysteine, from lysosomes. Plays an important role in melanin synthesis by catalyzing cystine export from melanosomes, possibly by inhibiting pheomelanin synthesis. In addition to cystine export, also acts as a positive regulator of mTORC1 signaling in kidney proximal tubular cells, via interactions with components of the v-ATPase and Ragulator complexes. Also involved in small GTPase-regulated vesicle trafficking and lysosomal localization of LAMP2A, independently of cystine transporter activity. The protein is Cystinosin of Bos taurus (Bovine).